Consider the following 48-residue polypeptide: Large ribosomal subunit protein eL40 (48 aa).

It belongs to the eukaryotic ribosomal protein eL40 family.

The polypeptide is Large ribosomal subunit protein eL40 (Methanosphaera stadtmanae (strain ATCC 43021 / DSM 3091 / JCM 11832 / MCB-3)).